We begin with the raw amino-acid sequence, 107 residues long: Sperm-specific class P protein 32 (107 aa).

Residues 1 to 20 (MLTIEPPSATFPASGGSSTH) form a disordered region. Residues 1-107 (MLTIEPPSAT…GDVTILLKTN (107 aa)) form the MSP domain.

In terms of tissue distribution, expressed at higher level in testis.

The sequence is that of Sperm-specific class P protein 32 (ssp-32) from Caenorhabditis elegans.